A 175-amino-acid chain; its full sequence is NADH-quinone oxidoreductase subunit I (175 aa).

2 4Fe-4S ferredoxin-type domains span residues 64–93 (KRDEQGRENCTACGLCAVSCPAEAITIIAD) and 110–139 (SLYEINMLRCIFCGLCEEACPKDAVYLTEE). C73, C76, C79, C83, C119, C122, C125, and C129 together coordinate [4Fe-4S] cluster.

The protein belongs to the complex I 23 kDa subunit family. NDH-1 is composed of 14 different subunits. Subunits NuoA, H, J, K, L, M, N constitute the membrane sector of the complex. It depends on [4Fe-4S] cluster as a cofactor.

It localises to the cell inner membrane. It catalyses the reaction a quinone + NADH + 5 H(+)(in) = a quinol + NAD(+) + 4 H(+)(out). In terms of biological role, NDH-1 shuttles electrons from NADH, via FMN and iron-sulfur (Fe-S) centers, to quinones in the respiratory chain. The immediate electron acceptor for the enzyme in this species is believed to be ubiquinone. Couples the redox reaction to proton translocation (for every two electrons transferred, four hydrogen ions are translocated across the cytoplasmic membrane), and thus conserves the redox energy in a proton gradient. This chain is NADH-quinone oxidoreductase subunit I, found in Cytophaga hutchinsonii (strain ATCC 33406 / DSM 1761 / CIP 103989 / NBRC 15051 / NCIMB 9469 / D465).